Consider the following 253-residue polypeptide: Triosephosphate isomerase (253 aa).

Substrate is bound at residue 8–10; the sequence is NWK. His93 serves as the catalytic Electrophile. Residue Glu165 is the Proton acceptor of the active site. Substrate-binding positions include Gly171, Ser210, and 231–232; that span reads GG.

Belongs to the triosephosphate isomerase family. As to quaternary structure, homodimer.

The protein resides in the cytoplasm. The catalysed reaction is D-glyceraldehyde 3-phosphate = dihydroxyacetone phosphate. It participates in carbohydrate biosynthesis; gluconeogenesis. It functions in the pathway carbohydrate degradation; glycolysis; D-glyceraldehyde 3-phosphate from glycerone phosphate: step 1/1. In terms of biological role, involved in the gluconeogenesis. Catalyzes stereospecifically the conversion of dihydroxyacetone phosphate (DHAP) to D-glyceraldehyde-3-phosphate (G3P). The polypeptide is Triosephosphate isomerase (Francisella tularensis subsp. holarctica (strain FTNF002-00 / FTA)).